Reading from the N-terminus, the 134-residue chain is MPPKSRQGAGRKVRRKEKKNVVHGHAHIKSTFNNTIVSITDPTGAVISWASAGQVGFKGSRKSTPFAAQMAAEAAARRAQEHGVRKVDVFVKGPGSGRETAIRSLQATGLEVGSIQDVTPVPHNGCRPPKRRRV.

The disordered stretch occupies residues 1-21 (MPPKSRQGAGRKVRRKEKKNV). The span at 9 to 21 (AGRKVRRKEKKNV) shows a compositional bias: basic residues.

Belongs to the universal ribosomal protein uS11 family. In terms of assembly, part of the 30S ribosomal subunit. Interacts with proteins S7 and S18. Binds to IF-3.

Located on the platform of the 30S subunit, it bridges several disparate RNA helices of the 16S rRNA. Forms part of the Shine-Dalgarno cleft in the 70S ribosome. The chain is Small ribosomal subunit protein uS11 from Thermobifida fusca (strain YX).